A 282-amino-acid polypeptide reads, in one-letter code: Pantothenate synthetase (282 aa).

ATP is bound at residue 30-37 (MGYLHEGH). The Proton donor role is filled by His-37. A (R)-pantoate-binding site is contributed by Gln-61. Gln-61 is a beta-alanine binding site. 147-150 (GMKD) lines the ATP pocket. Gln-153 serves as a coordination point for (R)-pantoate. ATP-binding positions include Val-176 and 184–187 (KSSR).

This sequence belongs to the pantothenate synthetase family. In terms of assembly, homodimer.

The protein localises to the cytoplasm. It catalyses the reaction (R)-pantoate + beta-alanine + ATP = (R)-pantothenate + AMP + diphosphate + H(+). It participates in cofactor biosynthesis; (R)-pantothenate biosynthesis; (R)-pantothenate from (R)-pantoate and beta-alanine: step 1/1. Its function is as follows. Catalyzes the condensation of pantoate with beta-alanine in an ATP-dependent reaction via a pantoyl-adenylate intermediate. The protein is Pantothenate synthetase of Bacillus thuringiensis (strain Al Hakam).